Consider the following 286-residue polypeptide: Bifunctional protein FolD (286 aa).

NADP(+) is bound by residues 165 to 167, Ser-190, and Val-231; that span reads GRS.

This sequence belongs to the tetrahydrofolate dehydrogenase/cyclohydrolase family. Homodimer.

The enzyme catalyses (6R)-5,10-methylene-5,6,7,8-tetrahydrofolate + NADP(+) = (6R)-5,10-methenyltetrahydrofolate + NADPH. The catalysed reaction is (6R)-5,10-methenyltetrahydrofolate + H2O = (6R)-10-formyltetrahydrofolate + H(+). It functions in the pathway one-carbon metabolism; tetrahydrofolate interconversion. Functionally, catalyzes the oxidation of 5,10-methylenetetrahydrofolate to 5,10-methenyltetrahydrofolate and then the hydrolysis of 5,10-methenyltetrahydrofolate to 10-formyltetrahydrofolate. In Bacillus cereus (strain G9842), this protein is Bifunctional protein FolD.